A 330-amino-acid polypeptide reads, in one-letter code: Aspartate--ammonia ligase (330 aa).

Belongs to the class-II aminoacyl-tRNA synthetase family. AsnA subfamily.

It is found in the cytoplasm. It carries out the reaction L-aspartate + NH4(+) + ATP = L-asparagine + AMP + diphosphate + H(+). It functions in the pathway amino-acid biosynthesis; L-asparagine biosynthesis; L-asparagine from L-aspartate (ammonia route): step 1/1. The chain is Aspartate--ammonia ligase from Streptococcus equi subsp. zooepidemicus (strain H70).